Consider the following 401-residue polypeptide: Beta-lactamase (401 aa).

The first 39 residues, 1-39, serve as a signal peptide directing secretion; the sequence is MKLFTSTLTAKKSSTHKPLISLALSVLISTLLISETAQA. Ser-102 (acyl-ester intermediate) is an active-site residue. Residue Tyr-188 is the Proton acceptor of the active site. Residue 353 to 355 coordinates substrate; it reads KTG.

The protein belongs to the class-C beta-lactamase family.

The protein localises to the secreted. The catalysed reaction is a beta-lactam + H2O = a substituted beta-amino acid. This protein is a serine beta-lactamase with a substrate specificity for cephalosporins. The chain is Beta-lactamase (ampC) from Psychrobacter immobilis.